The sequence spans 245 residues: Inner membrane protein YgaZ (245 aa).

At 1–24 (MESPTPQPAPGSATFMEGCKDSLP) the chain is on the cytoplasmic side. A helical membrane pass occupies residues 25–45 (IVISYIPVAFAFGLNATRLGF). Residues 46 to 63 (SPLESVFFSCIIYAGASQ) lie on the Periplasmic side of the membrane. Residues 64-84 (FVITAMLAAGSSLWIAALTVM) traverse the membrane as a helical segment. Residues 85 to 109 (AMDVRHVLYGPSLRSRIIQRLQKSK) are Cytoplasmic-facing. Residues 110–130 (TALWAFGLTDEVFAAATAKLV) traverse the membrane as a helical segment. Topologically, residues 131–140 (RNNRRWSENW) are periplasmic. Residues 141-161 (MIGIAFSSWSSWVFGTVIGAF) form a helical membrane-spanning segment. The Cytoplasmic portion of the chain corresponds to 162-172 (SGSGLLQGYPA). Residues 173 to 193 (VEAALGFMLPALFMSFLLASF) form a helical membrane-spanning segment. Residues 194-205 (QRKQSLCVTAAL) are Periplasmic-facing. The chain crosses the membrane as a helical span at residues 206–226 (VGALAGVTLFSIPVAILAGIV). At 227 to 245 (CGCLTALIQAFWQGAPDEL) the chain is on the cytoplasmic side.

The protein belongs to the AzlC family.

The protein localises to the cell inner membrane. The protein is Inner membrane protein YgaZ (ygaZ) of Escherichia coli (strain K12).